The chain runs to 110 residues: Ribonuclease (110 aa).

Glu73 (proton acceptor) is an active-site residue. His102 (proton donor) is an active-site residue.

It belongs to the ribonuclease N1/T1 family.

Its subcellular location is the secreted. Its function is as follows. Hydrolyzes phosphodiester bonds in RNA, poly- and oligoribonucleotides resulting in 3'-nucleoside monophosphates via 2',3'-cyclophosphate intermediates. The chain is Ribonuclease from Niallia circulans (Bacillus circulans).